The primary structure comprises 146 residues: Holo-[acyl-carrier-protein] synthase (146 aa).

Mg(2+)-binding residues include D9 and E63.

This sequence belongs to the P-Pant transferase superfamily. AcpS family. It depends on Mg(2+) as a cofactor.

It localises to the cytoplasm. The enzyme catalyses apo-[ACP] + CoA = holo-[ACP] + adenosine 3',5'-bisphosphate + H(+). Transfers the 4'-phosphopantetheine moiety from coenzyme A to a Ser of acyl-carrier-protein. This Burkholderia ambifaria (strain ATCC BAA-244 / DSM 16087 / CCUG 44356 / LMG 19182 / AMMD) (Burkholderia cepacia (strain AMMD)) protein is Holo-[acyl-carrier-protein] synthase.